Reading from the N-terminus, the 752-residue chain is Photosystem I P700 chlorophyll a apoprotein A1 (752 aa).

The next 8 helical transmembrane spans lie at 73–96 (IFAA…FHGA), 159–182 (LYCT…FHYH), 198–222 (LNHH…HVSA), 294–312 (IAHH…GHQY), 349–372 (WHAQ…HHMY), 388–414 (LCIF…IFMV), 436–458 (AIIS…LYIH), and 533–551 (FLIH…LILL). [4Fe-4S] cluster is bound by residues Cys575 and Cys584. The next 2 helical transmembrane spans lie at 591–612 (HVFL…HFSW) and 666–688 (LSAY…MFLF). Position 677 (His677) interacts with chlorophyll a'. Met685 and Tyr693 together coordinate chlorophyll a. Trp694 is a phylloquinone binding site. The chain crosses the membrane as a helical span at residues 726–746 (AVGVAHYLLGGIATTWAFFHA).

Belongs to the PsaA/PsaB family. As to quaternary structure, the PsaA/B heterodimer binds the P700 chlorophyll special pair and subsequent electron acceptors. PSI consists of a core antenna complex that captures photons, and an electron transfer chain that converts photonic excitation into a charge separation. The cyanobacterial PSI reaction center is composed of one copy each of PsaA,B,C,D,E,F,I,J,K,L,M and X, and forms trimeric complexes. Requires PSI electron transfer chain: 5 chlorophyll a, 1 chlorophyll a', 2 phylloquinones and 3 4Fe-4S clusters. PSI core antenna: 90 chlorophyll a, 22 carotenoids, 3 phospholipids and 1 galactolipid. P700 is a chlorophyll a/chlorophyll a' dimer, A0 is one or more chlorophyll a, A1 is one or both phylloquinones and FX is a shared 4Fe-4S iron-sulfur center. as cofactor.

The protein resides in the cellular thylakoid membrane. It catalyses the reaction reduced [plastocyanin] + hnu + oxidized [2Fe-2S]-[ferredoxin] = oxidized [plastocyanin] + reduced [2Fe-2S]-[ferredoxin]. Functionally, psaA and PsaB bind P700, the primary electron donor of photosystem I (PSI), as well as the electron acceptors A0, A1 and FX. PSI is a plastocyanin/cytochrome c6-ferredoxin oxidoreductase, converting photonic excitation into a charge separation, which transfers an electron from the donor P700 chlorophyll pair to the spectroscopically characterized acceptors A0, A1, FX, FA and FB in turn. Oxidized P700 is reduced on the lumenal side of the thylakoid membrane by plastocyanin or cytochrome c6. This chain is Photosystem I P700 chlorophyll a apoprotein A1, found in Nostoc sp. (strain PCC 7120 / SAG 25.82 / UTEX 2576).